Consider the following 360-residue polypeptide: Phospho-N-acetylmuramoyl-pentapeptide-transferase (360 aa).

Transmembrane regions (helical) follow at residues 16-36, 73-93, 97-117, 134-154, 168-188, 199-219, 236-256, 263-283, 288-308, and 338-358; these read FAVF…ALVL, TMGG…WADL, YVWV…VDDY, YFWQ…TAST, YSIP…VGSS, GLAI…CYLS, AGEL…FLWF, VFMG…IAVI, IVLF…VIQV, and VIVR…ATLK.

The protein belongs to the glycosyltransferase 4 family. MraY subfamily. Mg(2+) serves as cofactor.

The protein resides in the cell inner membrane. The catalysed reaction is UDP-N-acetyl-alpha-D-muramoyl-L-alanyl-gamma-D-glutamyl-meso-2,6-diaminopimeloyl-D-alanyl-D-alanine + di-trans,octa-cis-undecaprenyl phosphate = di-trans,octa-cis-undecaprenyl diphospho-N-acetyl-alpha-D-muramoyl-L-alanyl-D-glutamyl-meso-2,6-diaminopimeloyl-D-alanyl-D-alanine + UMP. It participates in cell wall biogenesis; peptidoglycan biosynthesis. Catalyzes the initial step of the lipid cycle reactions in the biosynthesis of the cell wall peptidoglycan: transfers peptidoglycan precursor phospho-MurNAc-pentapeptide from UDP-MurNAc-pentapeptide onto the lipid carrier undecaprenyl phosphate, yielding undecaprenyl-pyrophosphoryl-MurNAc-pentapeptide, known as lipid I. In Pseudomonas fluorescens (strain Pf0-1), this protein is Phospho-N-acetylmuramoyl-pentapeptide-transferase.